The sequence spans 602 residues: Gag-Pro polyprotein (602 aa).

Gly2 carries N-myristoyl glycine; by host lipidation. Positions 94–97 (PSAP) match the PTAP/PSAP motif motif. The disordered stretch occupies residues 94–121 (PSAPAAPVPTPICPTTTPPPPPPPSPEA). Over residues 97–121 (PAAPVPTPICPTTTPPPPPPPSPEA) the composition is skewed to pro residues. Positions 124–127 (PPPY) match the PPXY motif motif. 2 consecutive CCHC-type zinc fingers follow at residues 361–378 (QPCFRCGKVGHWSRDCTQ) and 384–401 (GPCPLCQDPSHWKRDCPQ). A disordered region spans residues 399–425 (CPQLKPPQEEGEPLLLDLPSTSGTTEE). Positions 473-551 (TQALLDTGAD…NKWTIIGRDA (79 aa)) constitute a Peptidase A2 domain. Catalysis depends on Asp478, which acts as the Protease; shared with dimeric partner. The segment at 582-602 (EHLPPPPQVDQFPLNLSASRP) is disordered.

As to quaternary structure, homodimer; the homodimers are part of the immature particles. Interacts with human TSG101 and NEDD4; these interactions are essential for budding and release of viral particles. Homodimer; further assembles as homohexamers. In terms of processing, specific enzymatic cleavages by the viral protease yield mature proteins. The polyprotein is cleaved during and after budding, this process is termed maturation. The protease is autoproteolytically processed at its N- and C-termini. Post-translationally, phosphorylation of the matrix protein p19 by MAPK1 seems to play a role in budding. Myristoylated. Myristoylation of the matrix (MA) domain mediates the transport and binding of Gag polyproteins to the host plasma membrane and is required for the assembly of viral particles.

It is found in the virion. Its function is as follows. The matrix domain targets Gag, Gag-Pro and Gag-Pro-Pol polyproteins to the plasma membrane via a multipartite membrane binding signal, that includes its myristoylated N-terminus. Functionally, matrix protein. In terms of biological role, forms the spherical core of the virus that encapsulates the genomic RNA-nucleocapsid complex. Binds strongly to viral nucleic acids and promote their aggregation. Also destabilizes the nucleic acids duplexes via highly structured zinc-binding motifs. Its function is as follows. The aspartyl protease mediates proteolytic cleavages of Gag and Gag-Pol polyproteins during or shortly after the release of the virion from the plasma membrane. Cleavages take place as an ordered, step-wise cascade to yield mature proteins. This process is called maturation. Displays maximal activity during the budding process just prior to particle release from the cell (Potential). Cleaves the translation initiation factor eIF4G leading to the inhibition of host cap-dependent translation. This chain is Gag-Pro polyprotein (gag-pro), found in Homo sapiens (Human).